Reading from the N-terminus, the 197-residue chain is Pyridoxal 5'-phosphate synthase subunit PdxT (197 aa).

Position 53–55 (53–55) interacts with L-glutamine; the sequence is GES. The Nucleophile role is filled by cysteine 85. L-glutamine is bound by residues arginine 114 and 142–143; that span reads IR. Residues histidine 179 and glutamate 181 each act as charge relay system in the active site.

Belongs to the glutaminase PdxT/SNO family. In terms of assembly, in the presence of PdxS, forms a dodecamer of heterodimers. Only shows activity in the heterodimer.

It carries out the reaction aldehydo-D-ribose 5-phosphate + D-glyceraldehyde 3-phosphate + L-glutamine = pyridoxal 5'-phosphate + L-glutamate + phosphate + 3 H2O + H(+). The catalysed reaction is L-glutamine + H2O = L-glutamate + NH4(+). It functions in the pathway cofactor biosynthesis; pyridoxal 5'-phosphate biosynthesis. Functionally, catalyzes the hydrolysis of glutamine to glutamate and ammonia as part of the biosynthesis of pyridoxal 5'-phosphate. The resulting ammonia molecule is channeled to the active site of PdxS. This chain is Pyridoxal 5'-phosphate synthase subunit PdxT, found in Thermococcus kodakarensis (strain ATCC BAA-918 / JCM 12380 / KOD1) (Pyrococcus kodakaraensis (strain KOD1)).